A 146-amino-acid chain; its full sequence is UPF0178 protein Lin1493 (146 aa).

Belongs to the UPF0178 family.

The sequence is that of UPF0178 protein Lin1493 from Listeria innocua serovar 6a (strain ATCC BAA-680 / CLIP 11262).